We begin with the raw amino-acid sequence, 584 residues long: ATP-dependent ubiquitin transferase-like protein Cap2 (584 aa).

Residues 1 to 137 are E2-like domain; that stretch reads MKQELHHTLL…SGTSNDVELE (137 aa). Catalysis depends on Cys-90, which acts as the For E2-like domain. The linker domain stretch occupies residues 138-338; sequence GEFSAYWQSE…LLSRNQSRPD (201 aa). The adenylation plus E1-like domain stretch occupies residues 339 to 584; the sequence is VGNLSQKRIA…RFSGCNICDE (246 aa). Cys-522 functions as the For E1-like domain in the catalytic mechanism.

It in the C-terminal section; belongs to the HesA/MoeB/ThiF family. In terms of assembly, interacts with CD-NTase DncV in the presence and absence of phage T2. A Cap2 dimer is bound on either side by a DncV monomer.

In terms of biological role, CD-NTase priming component of a CBASS antiviral system. CBASS (cyclic oligonucleotide-based antiphage signaling system) provides immunity against bacteriophages. The CD-NTase protein (DncV) synthesizes cyclic nucleotides in response to infection; these serve as specific second messenger signals. The signals activate a diverse range of effectors, leading to bacterial cell death and thus abortive phage infection. A type II-A(GA) CBASS system. Functionally, primes DncV; acts as a protein transferase, conjugating DncV, the CD-NTase, to unidentified target(s) in the cell via an E1-E2 ubiquitin transferase-like mechanism. During the conjugation reaction DncV is probably transiently attached to AMP. Protein conjugation requires ATP. Its function is as follows. Protects E.coli against phage infection. When the CBASS operon (capV-dncV-cap2-cap3) is introduced in E.coli MG1655 there is about 100-fold protection against phages P1 and T2. When the operon is introduced in E.coli MG1655 there is a more than 10(3) decrease in the efficiency of T2 plaque formation. Protects 100-fold against phage T5, offers no protection against T7. When the operon is introduced in E.coli MG1655 it protects against phages T2, T4, T5 and T6. Another paper shows the operon confers protection against phages P1, T2, T5 and T6 but not T4 or lambda. The polypeptide is ATP-dependent ubiquitin transferase-like protein Cap2 (Vibrio cholerae serotype O1 (strain ATCC 39315 / El Tor Inaba N16961)).